An 809-amino-acid polypeptide reads, in one-letter code: Mediator of RNA polymerase II transcription subunit 15 (809 aa).

Disordered stretches follow at residues 115–137, 183–211, and 413–549; these read AMQGVAGGQQGAGAAGPMQQMIQ, QLQQHHQNQQMQHQNQQQQQAQNQQQQNQ, and GQMM…ASQS. The span at 119–128 shows a compositional bias: gly residues; sequence VAGGQQGAGA. The segment covering 446 to 467 has biased composition (low complexity); the sequence is QQMPQAQQMMSSPSPVQVQTPQ. The span at 468–484 shows a compositional bias: pro residues; that stretch reads SMPPPPQPQPSPQPPSS. 2 stretches are compositionally biased toward low complexity: residues 485-502 and 510-520; these read QPNSVSSGPTPSPGGFQP and QSPASSRTPQS. A compositionally biased stretch (polar residues) spans 533–549; that stretch reads TPGNPSSVMSPAGASQS.

It belongs to the Mediator complex subunit 15 family. Component of the Mediator complex. Interacts with srebf1 and srebf2. Interacts with smad2, smad3 and smad4.

It is found in the cytoplasm. Its subcellular location is the nucleus. Component of the Mediator complex, a coactivator involved in the regulated transcription of nearly all RNA polymerase II-dependent genes. Mediator functions as a bridge to convey information from gene-specific regulatory proteins to the basal RNA polymerase II transcription machinery. Mediator is recruited to promoters by direct interactions with regulatory proteins and serves as a scaffold for the assembly of a functional preinitiation complex with RNA polymerase II and the general transcription factors. Required for cholesterol-dependent gene regulation. Positively regulates the Nodal signaling pathway. The sequence is that of Mediator of RNA polymerase II transcription subunit 15 (med15) from Danio rerio (Zebrafish).